A 419-amino-acid polypeptide reads, in one-letter code: L-rhamnose isomerase (419 aa).

3 residues coordinate Mn(2+): His-262, Asp-294, and Asp-296.

This sequence belongs to the rhamnose isomerase family. As to quaternary structure, homotetramer. Mn(2+) is required as a cofactor.

The protein resides in the cytoplasm. It carries out the reaction L-rhamnopyranose = L-rhamnulose. Its pathway is carbohydrate degradation; L-rhamnose degradation; glycerone phosphate from L-rhamnose: step 1/3. Its function is as follows. Catalyzes the interconversion of L-rhamnose and L-rhamnulose. The protein is L-rhamnose isomerase of Escherichia coli (strain K12 / MC4100 / BW2952).